A 79-amino-acid chain; its full sequence is Cyclin-dependent kinases regulatory subunit 1 (79 aa).

Residue serine 2 is modified to N-acetylserine.

This sequence belongs to the CKS family. In terms of assembly, forms a homohexamer that can probably bind six kinase subunits.

Its function is as follows. Binds to the catalytic subunit of the cyclin dependent kinases and is essential for their biological function. The polypeptide is Cyclin-dependent kinases regulatory subunit 1 (CKS1B) (Bos taurus (Bovine)).